The sequence spans 350 residues: E3 ubiquitin-protein ligase TRIM63 (350 aa).

The RING-type zinc-finger motif lies at 23-79 (CPICLEMFTKPVVILPCQHNLCRKCANDIFQAANPYWTNRGGSVSMSGGRFRCPSCR). The interaction with TTN stretch occupies residues 74–218 (RCPSCRHEVI…LSQKFDTLYA (145 aa)). The segment at 117–159 (GSHPMCKEHEDEKINIYCLTCEVPTCSLCKVFGAHQACEVAPL) adopts a B box-type zinc-finger fold. Residues C122, H125, C145, and H151 each contribute to the Zn(2+) site. A coiled-coil region spans residues 207–269 (EELSQKFDTL…VETAIQSLDE (63 aa)). Positions 267-325 (LDEPGGATFLSSAKQLIKSNVEASKGCQLGKTEQGFENMDYFTLDLEHIAEALRAIDFG) constitute a COS domain. Over residues 325–344 (GTDEEEEEFTEEEADEEEGV) the composition is skewed to acidic residues. The disordered stretch occupies residues 325-350 (GTDEEEEEFTEEEADEEEGVTTEGHQ).

In terms of assembly, homodimer. Homooligomer and heterooligomer. Interacts with SUMO2, titin/TTN and GMEB1. Interacts with TRIM54 and probably with TRIM55. Interacts with TNNI3. Forms a ternary complex with RACK1 and PRKCE. Interacts with CKM.

Its subcellular location is the cytoplasm. The protein resides in the nucleus. It localises to the myofibril. It is found in the sarcomere. The protein localises to the m line. Its subcellular location is the z line. It carries out the reaction S-ubiquitinyl-[E2 ubiquitin-conjugating enzyme]-L-cysteine + [acceptor protein]-L-lysine = [E2 ubiquitin-conjugating enzyme]-L-cysteine + N(6)-ubiquitinyl-[acceptor protein]-L-lysine.. It participates in protein modification; protein ubiquitination. Its function is as follows. E3 ubiquitin ligase. Mediates the ubiquitination and subsequent proteasomal degradation of CKM, GMEB1 and HIBADH. Regulates the proteasomal degradation of muscle proteins under amino acid starvation, where muscle protein is catabolized to provide other organs with amino acids. Inhibits de novo skeletal muscle protein synthesis under amino acid starvation. Regulates proteasomal degradation of cardiac troponin I/TNNI3 and probably of other sarcomeric-associated proteins. May play a role in striated muscle atrophy and hypertrophy by regulating an anti-hypertrophic PKC-mediated signaling pathway. May regulate the organization of myofibrils through TTN in muscle cells. The sequence is that of E3 ubiquitin-protein ligase TRIM63 (Trim63) from Mus musculus (Mouse).